Reading from the N-terminus, the 131-residue chain is Fumarate reductase subunit C (131 aa).

A run of 3 helical transmembrane segments spans residues 30-50, 57-77, and 109-129; these read EGTAVPAVWFSIELIFGLFAL, WMGFVGFLQNPVVVILNLITL, and IIKGLWVVTAVVTVVILYVAL.

The protein belongs to the FrdC family. Part of an enzyme complex containing four subunits: a flavoprotein (FrdA), an iron-sulfur protein (FrdB), and two hydrophobic anchor proteins (FrdC and FrdD).

The protein localises to the cell inner membrane. Functionally, two distinct, membrane-bound, FAD-containing enzymes are responsible for the catalysis of fumarate and succinate interconversion; fumarate reductase is used in anaerobic growth, and succinate dehydrogenase is used in aerobic growth. Anchors the catalytic components of the fumarate reductase complex to the cell inner membrane, binds quinones. This Salmonella heidelberg (strain SL476) protein is Fumarate reductase subunit C.